The primary structure comprises 188 residues: Apolipoprotein M (188 aa).

Residues Met-1–Gln-22 constitute a signal peptide (not cleaved). Disulfide bonds link Cys-23-Cys-167, Cys-95-Cys-183, and Cys-128-Cys-157. Asn-135 carries N-linked (GlcNAc...) asparagine glycosylation. The tetradecanoate site is built by Glu-136 and Arg-143.

The protein belongs to the calycin superfamily. Lipocalin family. Highly divergent. As to quaternary structure, interacts with LRP2; LRP2 mediates APOM renal uptake and subsequent lysosomal degradation. Plasma protein. Expressed in liver and kidney.

The protein resides in the secreted. Its function is as follows. Probably involved in lipid transport. Can bind sphingosine-1-phosphate, myristic acid, palmitic acid and stearic acid, retinol, all-trans-retinoic acid and 9-cis-retinoic acid. The sequence is that of Apolipoprotein M (APOM) from Homo sapiens (Human).